Here is a 279-residue protein sequence, read N- to C-terminus: Acyl-[acyl-carrier-protein]--UDP-N-acetylglucosamine O-acyltransferase (279 aa).

Residues 260–279 (AAKEAFQEESVDKEGALVES) are disordered.

Belongs to the transferase hexapeptide repeat family. LpxA subfamily. Homotrimer.

It is found in the cytoplasm. The catalysed reaction is a (3R)-hydroxyacyl-[ACP] + UDP-N-acetyl-alpha-D-glucosamine = a UDP-3-O-[(3R)-3-hydroxyacyl]-N-acetyl-alpha-D-glucosamine + holo-[ACP]. It participates in glycolipid biosynthesis; lipid IV(A) biosynthesis; lipid IV(A) from (3R)-3-hydroxytetradecanoyl-[acyl-carrier-protein] and UDP-N-acetyl-alpha-D-glucosamine: step 1/6. Functionally, involved in the biosynthesis of lipid A, a phosphorylated glycolipid that anchors the lipopolysaccharide to the outer membrane of the cell. This chain is Acyl-[acyl-carrier-protein]--UDP-N-acetylglucosamine O-acyltransferase, found in Chlamydia abortus (strain DSM 27085 / S26/3) (Chlamydophila abortus).